The primary structure comprises 414 residues: Ribulose bisphosphate carboxylase large chain (414 aa).

Asparagine 101 and threonine 151 together coordinate substrate. The active-site Proton acceptor is the lysine 153. Lysine 155 contributes to the substrate binding site. Positions 179, 181, and 182 each coordinate Mg(2+). Position 179 is an N6-carboxylysine (lysine 179). Histidine 272 serves as the catalytic Proton acceptor. Positions 273, 305, and 357 each coordinate substrate.

It belongs to the RuBisCO large chain family. Type I subfamily. In terms of assembly, heterohexadecamer of 8 large chains and 8 small chains; disulfide-linked. The disulfide link is formed within the large subunit homodimers. It depends on Mg(2+) as a cofactor. Post-translationally, the disulfide bond which can form in the large chain dimeric partners within the hexadecamer appears to be associated with oxidative stress and protein turnover.

The protein localises to the plastid. The protein resides in the chloroplast. It carries out the reaction 2 (2R)-3-phosphoglycerate + 2 H(+) = D-ribulose 1,5-bisphosphate + CO2 + H2O. The enzyme catalyses D-ribulose 1,5-bisphosphate + O2 = 2-phosphoglycolate + (2R)-3-phosphoglycerate + 2 H(+). In terms of biological role, ruBisCO catalyzes two reactions: the carboxylation of D-ribulose 1,5-bisphosphate, the primary event in carbon dioxide fixation, as well as the oxidative fragmentation of the pentose substrate in the photorespiration process. Both reactions occur simultaneously and in competition at the same active site. In Onychium japonicum (Japanese claw fern), this protein is Ribulose bisphosphate carboxylase large chain (rbcL).